Reading from the N-terminus, the 352-residue chain is Phosphoribosylformylglycinamidine cyclo-ligase (352 aa).

The protein belongs to the AIR synthase family.

It is found in the cytoplasm. The enzyme catalyses 2-formamido-N(1)-(5-O-phospho-beta-D-ribosyl)acetamidine + ATP = 5-amino-1-(5-phospho-beta-D-ribosyl)imidazole + ADP + phosphate + H(+). The protein operates within purine metabolism; IMP biosynthesis via de novo pathway; 5-amino-1-(5-phospho-D-ribosyl)imidazole from N(2)-formyl-N(1)-(5-phospho-D-ribosyl)glycinamide: step 2/2. This chain is Phosphoribosylformylglycinamidine cyclo-ligase, found in Stenotrophomonas maltophilia (strain K279a).